The sequence spans 309 residues: uncharacterized protein (309 aa).

Over residues 1–11 the composition is skewed to basic residues; sequence MPGNSRRRGAV. The disordered stretch occupies residues 1–69; it reads MPGNSRRRGA…PVKRTDETET (69 aa). S-adenosyl-L-methionine contacts are provided by G261, I281, and L290.

The protein belongs to the class IV-like SAM-binding methyltransferase superfamily. RNA methyltransferase TrmH family.

This is an uncharacterized protein from Mycobacterium leprae (strain TN).